Reading from the N-terminus, the 312-residue chain is Retron Ec83 reverse transcriptase (312 aa).

Residues 14–239 (PDFDVLLKSR…HNRHVTGVTL (226 aa)) form the Reverse transcriptase domain. Mg(2+) contacts are provided by D97, D185, and D186.

It belongs to the bacterial reverse transcriptase family.

It carries out the reaction DNA(n) + a 2'-deoxyribonucleoside 5'-triphosphate = DNA(n+1) + diphosphate. Its function is as follows. Reverse transcriptase (RT) component of antiviral defense system retron Ec83, composed of a non-coding RNA (ncRNA), this reverse transcriptase (RT), a probable ATPase and a putative HNH endonuclease. Expression of retron Ec83 confers protection against bacteriophages T2, T4 and T6. At multiplicity of infection (MOI) of 0.02 cultures slow growth when infected with T4 but do not collapse, at MOI 2 cultures enter growth stasis. Responsible for synthesis of msDNA-Ec83 (a linear ssDNA with a 5'-terminal phosphate residue). Unlike most known msDNAs the mature product from the original strain does not have an RNA component. When the ncRNA plus RT are expressed in strain K12 / JM109 only linear DNA is seen in stationary phase cells, but logarithmic phase cells have both a linear and branched msDNA (a branched molecule with RNA linked by a 2',5'-phosphodiester bond to ssDNA, a 'classic' retron). The branched msDNA is probably the precursor for the mature linear msDNA, the precursor is cleaved endonucleolytically by ExoVII (xseA-xseB) leaving the observed mature 5'-phosphate ssDNA terminus. The retron transcript serves as primer (from a conserved internal G residue) and template for the reaction, and codes for the RT. Overexpression of the ncRNA and RT, which leads to increased levels of msDNA, is mutagenic in vivo. This may be due to a mismatch in the msDNA stem which binds and sequesters MutS and/or MutL. In Escherichia coli, this protein is Retron Ec83 reverse transcriptase.